A 250-amino-acid chain; its full sequence is uncharacterized protein (250 aa).

6 4Fe-4S ferredoxin-type domains span residues 38-67 (KLLYINETKCIRCNLCYKECPVDAIEKAKV), 69-98 (KSAKIIEDKCVKCEICAQTCPVGAIYVIEG), 124-153 (KKYELDENTCIKCGICARFCPTNAIKAVRR), 154-183 (KSIEVNLDLCMGCGACAEVCPKKCIKVERE), 191-220 (RDIEVDKNLCVGCLVCIEECPINAIDQDGD), and 220-249 (DKVKINKDKCILCGRCVDVCPTNAIKMWEK). Residues Cys47, Cys50, Cys53, Cys57, Cys78, Cys81, Cys84, Cys88, Cys133, Cys136, Cys139, Cys143, Cys163, Cys166, Cys169, Cys173, Cys200, Cys203, Cys206, Cys210, Cys229, Cys232, Cys235, and Cys239 each contribute to the [4Fe-4S] cluster site.

This is an uncharacterized protein from Methanocaldococcus jannaschii (strain ATCC 43067 / DSM 2661 / JAL-1 / JCM 10045 / NBRC 100440) (Methanococcus jannaschii).